The following is a 339-amino-acid chain: DNA-directed RNA polymerase subunit alpha (339 aa).

Residues 1–233 (MVREEIAVAT…DLFIPFLHAE (233 aa)) form an alpha N-terminal domain (alpha-NTD) region. The alpha C-terminal domain (alpha-CTD) stretch occupies residues 267–339 (KKMALKSIFI…FGFDLPKNGK (73 aa)).

This sequence belongs to the RNA polymerase alpha chain family. As to quaternary structure, in plastids the minimal PEP RNA polymerase catalytic core is composed of four subunits: alpha, beta, beta', and beta''. When a (nuclear-encoded) sigma factor is associated with the core the holoenzyme is formed, which can initiate transcription.

The protein localises to the plastid. It localises to the chloroplast. The enzyme catalyses RNA(n) + a ribonucleoside 5'-triphosphate = RNA(n+1) + diphosphate. In terms of biological role, DNA-dependent RNA polymerase catalyzes the transcription of DNA into RNA using the four ribonucleoside triphosphates as substrates. The polypeptide is DNA-directed RNA polymerase subunit alpha (Piper cenocladum (Ant piper)).